The primary structure comprises 371 residues: tRNA-specific 2-thiouridylase MnmA (371 aa).

Residues 7–14 (GLSGGVDS) and M33 each bind ATP. Residues 103-105 (NPD) are interaction with target base in tRNA. C108 (nucleophile) is an active-site residue. A disulfide bridge connects residues C108 and C201. Residue G133 coordinates ATP. The interval 151-153 (KDQ) is interaction with tRNA. The Cysteine persulfide intermediate role is filled by C201. Residues 308 to 309 (RY) form an interaction with tRNA region.

It belongs to the MnmA/TRMU family.

It localises to the cytoplasm. The catalysed reaction is S-sulfanyl-L-cysteinyl-[protein] + uridine(34) in tRNA + AH2 + ATP = 2-thiouridine(34) in tRNA + L-cysteinyl-[protein] + A + AMP + diphosphate + H(+). In terms of biological role, catalyzes the 2-thiolation of uridine at the wobble position (U34) of tRNA, leading to the formation of s(2)U34. This Mycoplasmopsis pulmonis (strain UAB CTIP) (Mycoplasma pulmonis) protein is tRNA-specific 2-thiouridylase MnmA.